A 774-amino-acid chain; its full sequence is Vezatin (774 aa).

2 consecutive transmembrane segments (helical) span residues 138–158 and 163–183; these read IATP…AVAA and SISS…FTVL. A coiled-coil region spans residues 430-457; sequence VRSLQLHLKALLNEVIVLEDELDKLSSC. Residues 746–757 show a composition bias toward acidic residues; it reads FGDEWDDDDDNE. The segment at 746-774 is disordered; it reads FGDEWDDDDDNEDHDHDKERNNDSSQLEG. A compositionally biased stretch (basic and acidic residues) spans 758 to 767; it reads DHDHDKERNN.

The protein belongs to the vezatin family. As to quaternary structure, interacts with myosin VIIa and the cadherin-catenins complex.

It localises to the cell membrane. Its subcellular location is the cell junction. The protein resides in the adherens junction. It is found in the nucleus. Its function is as follows. Plays a pivotal role in the establishment of adherens junctions and their maintenance in adult life. The polypeptide is Vezatin (vezt) (Xenopus laevis (African clawed frog)).